The sequence spans 266 residues: UPF0354 protein LMHCC_0955 (266 aa).

This sequence belongs to the UPF0354 family.

The chain is UPF0354 protein LMHCC_0955 from Listeria monocytogenes serotype 4a (strain HCC23).